The chain runs to 143 residues: 3-hydroxyacyl-[acyl-carrier-protein] dehydratase FabZ (143 aa).

Residue H49 is part of the active site.

The protein belongs to the thioester dehydratase family. FabZ subfamily.

It is found in the cytoplasm. It catalyses the reaction a (3R)-hydroxyacyl-[ACP] = a (2E)-enoyl-[ACP] + H2O. In terms of biological role, involved in unsaturated fatty acids biosynthesis. Catalyzes the dehydration of short chain beta-hydroxyacyl-ACPs and long chain saturated and unsaturated beta-hydroxyacyl-ACPs. In Wolbachia pipientis subsp. Culex pipiens (strain wPip), this protein is 3-hydroxyacyl-[acyl-carrier-protein] dehydratase FabZ.